A 328-amino-acid polypeptide reads, in one-letter code: DNA polymerase III subunit delta' (328 aa).

In terms of assembly, DNA polymerase III contains a core (composed of alpha, epsilon and theta chains) that associates with a tau subunit. This core dimerizes to form the POLIII' complex. PolIII' associates with the gamma complex (composed of gamma, delta, delta', psi and chi chains) and with the beta chain to form the complete DNA polymerase III complex.

It catalyses the reaction DNA(n) + a 2'-deoxyribonucleoside 5'-triphosphate = DNA(n+1) + diphosphate. DNA polymerase III is a complex, multichain enzyme responsible for most of the replicative synthesis in bacteria. This DNA polymerase also exhibits 3' to 5' exonuclease activity. The sequence is that of DNA polymerase III subunit delta' (holB) from Buchnera aphidicola subsp. Schizaphis graminum (strain Sg).